The chain runs to 148 residues: Lysozyme-like protein 2 (148 aa).

Positions 1–19 (MKAAGILTLIGCLVTGAES) are cleaved as a signal peptide. The C-type lysozyme domain maps to 20–148 (KIYTRCKLAK…SDWKKDCEVS (129 aa)). 4 disulfides stabilise this stretch: cysteine 25/cysteine 145, cysteine 49/cysteine 133, cysteine 83/cysteine 98, and cysteine 94/cysteine 112. The active site involves glutamate 54. N-linked (GlcNAc...) asparagine glycosylation occurs at asparagine 58. Aspartate 71 is a catalytic residue.

The protein belongs to the glycosyl hydrolase 22 family. In terms of assembly, monomer. Expressed in testis, epididymis and placenta.

Its subcellular location is the secreted. It carries out the reaction Hydrolysis of (1-&gt;4)-beta-linkages between N-acetylmuramic acid and N-acetyl-D-glucosamine residues in a peptidoglycan and between N-acetyl-D-glucosamine residues in chitodextrins.. The protein is Lysozyme-like protein 2 (LYZL2) of Homo sapiens (Human).